A 76-amino-acid polypeptide reads, in one-letter code: Omega-conotoxin-like TxMKLT1-0141 (76 aa).

The signal sequence occupies residues 1–22 (MKLTCMMIVAVLFLTAWTFATA). A propeptide spanning residues 23-50 (DDSSNGLENLFPKAHHEMKNPEASKLNE) is cleaved from the precursor. 3 disulfide bridges follow: C52-C67, C59-C70, and C66-C75.

It belongs to the conotoxin O1 superfamily. As to expression, expressed by the venom duct.

It localises to the secreted. In terms of biological role, omega-conotoxins act at presynaptic membranes, they bind and block voltage-gated calcium channels (Cav). This Conus textile (Cloth-of-gold cone) protein is Omega-conotoxin-like TxMKLT1-0141.